The following is a 474-amino-acid chain: Dihydrolipoyl dehydrogenase (474 aa).

Residues 36–45 (ERYNTLGGVC), lysine 54, and glycine 117 contribute to the FAD site. Cysteine 45 and cysteine 50 form a disulfide bridge. Residues 182–186 (GGGII) and glutamate 205 contribute to the NAD(+) site. Lysine 220 is modified (N6-acetyllysine). NAD(+)-binding positions include valine 238 and 270-273 (AIGR). Positions 313 and 321 each coordinate FAD. Histidine 445 (proton acceptor) is an active-site residue.

Belongs to the class-I pyridine nucleotide-disulfide oxidoreductase family. In terms of assembly, homodimer. It depends on FAD as a cofactor.

Its subcellular location is the cytoplasm. The catalysed reaction is N(6)-[(R)-dihydrolipoyl]-L-lysyl-[protein] + NAD(+) = N(6)-[(R)-lipoyl]-L-lysyl-[protein] + NADH + H(+). Lipoamide dehydrogenase is a component of the glycine cleavage system as well as of the alpha-ketoacid dehydrogenase complexes. The protein is Dihydrolipoyl dehydrogenase (lpdA) of Shigella flexneri.